The chain runs to 196 residues: Orotate phosphoribosyltransferase (196 aa).

117 to 125 (EDVVTTGLS) contributes to the 5-phospho-alpha-D-ribose 1-diphosphate binding site. Orotate is bound by residues T121 and R149.

It belongs to the purine/pyrimidine phosphoribosyltransferase family. PyrE subfamily. In terms of assembly, homodimer. The cofactor is Mg(2+).

The catalysed reaction is orotidine 5'-phosphate + diphosphate = orotate + 5-phospho-alpha-D-ribose 1-diphosphate. Its pathway is pyrimidine metabolism; UMP biosynthesis via de novo pathway; UMP from orotate: step 1/2. In terms of biological role, catalyzes the transfer of a ribosyl phosphate group from 5-phosphoribose 1-diphosphate to orotate, leading to the formation of orotidine monophosphate (OMP). This chain is Orotate phosphoribosyltransferase, found in Rhizorhabdus wittichii (strain DSM 6014 / CCUG 31198 / JCM 15750 / NBRC 105917 / EY 4224 / RW1) (Sphingomonas wittichii).